Reading from the N-terminus, the 205-residue chain is Holliday junction branch migration complex subunit RuvA (205 aa).

A domain I region spans residues 1-64; it reads MIGKLTGLVD…EDAIRLFGFP (64 aa). The domain II stretch occupies residues 65–143; it reads SEVERDWFRL…ALGPVDSLTA (79 aa). The segment at 144–153 is flexible linker; the sequence is KLTIAEAEGT. A domain III region spans residues 153–205; the sequence is TAPVAAQDAITALVNLGYGRPQAAAAVATSLEALGETAPLADLIRRGLKELAR.

This sequence belongs to the RuvA family. In terms of assembly, homotetramer. Forms an RuvA(8)-RuvB(12)-Holliday junction (HJ) complex. HJ DNA is sandwiched between 2 RuvA tetramers; dsDNA enters through RuvA and exits via RuvB. An RuvB hexamer assembles on each DNA strand where it exits the tetramer. Each RuvB hexamer is contacted by two RuvA subunits (via domain III) on 2 adjacent RuvB subunits; this complex drives branch migration. In the full resolvosome a probable DNA-RuvA(4)-RuvB(12)-RuvC(2) complex forms which resolves the HJ.

Its subcellular location is the cytoplasm. Its function is as follows. The RuvA-RuvB-RuvC complex processes Holliday junction (HJ) DNA during genetic recombination and DNA repair, while the RuvA-RuvB complex plays an important role in the rescue of blocked DNA replication forks via replication fork reversal (RFR). RuvA specifically binds to HJ cruciform DNA, conferring on it an open structure. The RuvB hexamer acts as an ATP-dependent pump, pulling dsDNA into and through the RuvAB complex. HJ branch migration allows RuvC to scan DNA until it finds its consensus sequence, where it cleaves and resolves the cruciform DNA. In Beijerinckia indica subsp. indica (strain ATCC 9039 / DSM 1715 / NCIMB 8712), this protein is Holliday junction branch migration complex subunit RuvA.